Here is a 92-residue protein sequence, read N- to C-terminus: Precursor of elicitor peptide 1 (92 aa).

A propeptide spanning residues 1–69 (MEKSDRRSEE…EKEEVVVTSR (69 aa)) is cleaved from the precursor. Residues 35-92 (HQDSPTTSSPGTSKQPKEEKEDVTMEKEEVVVTSRATKVKAKQRGKEKVSSGRPGQHN) are disordered. The segment covering 37–48 (DSPTTSSPGTSK) has biased composition (polar residues). Residues 49–64 (QPKEEKEDVTMEKEEV) are compositionally biased toward basic and acidic residues.

Belongs to the brassicaceae elicitor peptide family. As to quaternary structure, interacts with its receptor PEPR1.

Elicitor of plant defense. Induces the production of plant defensin (PDF1.2) and of H(2)O(2). Promotes resistance to the root fungal pathogen P.irregulare. Triggers the expression of several PROSCOOP genes (e.g. PROSCOOP2, PROSCOOP7, PROSCOOP8, PROSCOOP12 and PROSCOOP13). The polypeptide is Precursor of elicitor peptide 1 (Arabidopsis thaliana (Mouse-ear cress)).